The sequence spans 494 residues: Hydroxyneurosporene desaturase (494 aa).

Belongs to the carotenoid/retinoid oxidoreductase family.

It carries out the reaction rhodopin + A = (3E)-3,4-didehydrorhodopin + AH2. It functions in the pathway carotenoid biosynthesis; spheroidene biosynthesis. In terms of biological role, catalyzes the introduction of C-3,4 double bonds into 1-hydroxyneurosporene (1-HO-Neu) to yield demethylspheroidene (DMS). This Rhodobacter capsulatus (strain ATCC BAA-309 / NBRC 16581 / SB1003) protein is Hydroxyneurosporene desaturase (crtD).